The primary structure comprises 529 residues: Sodium/hydrogen exchanger 4 (529 aa).

At 1-19 the chain is on the cytoplasmic side; it reads MSIGLTEFVTNKLAAEHPQ. Residues 20–40 traverse the membrane as a helical segment; the sequence is VIPISVFIAILCLCLVIGHLL. Over 41-45 the chain is Vacuolar; the sequence is EENRW. The helical transmembrane segment at 46 to 66 threads the bilayer; sequence VNESITAILVGAASGTVILLI. Residues 67–73 lie on the Cytoplasmic side of the membrane; the sequence is SKGKSSH. Residues 74–94 constitute an intramembrane region (helical); sequence ILVFDEELFFIYLLPPIIFNA. Topologically, residues 95–112 are cytoplasmic; that stretch reads GFQVKKKKFFHNFLTIMS. Residues 113–133 form a helical membrane-spanning segment; sequence FGVIGVFISTVIISFGTWWLF. The Vacuolar segment spans residues 134-171; that stretch reads PKLGFKGLSARDYLAIGTIFSSTDTVCTLQILHQDETP. A helical membrane pass occupies residues 172-192; it reads LLYSLVFGEGVVNDATSVVLF. Residues 193–214 are Cytoplasmic-facing; sequence NAVQKIQFESLTGWTALQVFGN. The helical transmembrane segment at 215-235 threads the bilayer; the sequence is FLYLFSTSTLLGIGVGLITSF. The Vacuolar portion of the chain corresponds to 236–250; the sequence is VLKTLYFGRHSTTRE. Residues 251–267 traverse the membrane as a helical segment; sequence LAIMVLMAYLSYMLAEL. The Cytoplasmic segment spans residues 268-273; it reads FSLSGI. The helical transmembrane segment at 274–291 threads the bilayer; sequence LTVFFCGVLMSHYASYNV. At 292–301 the chain is on the vacuolar side; it reads TESSRITSRH. Residues 302–322 traverse the membrane as a helical segment; that stretch reads VFAMLSFIAETFIFLYVGTDA. The Cytoplasmic segment spans residues 323 to 342; it reads LDFTKWKTSSLSFGGTLGVS. Residues 343 to 363 traverse the membrane as a helical segment; it reads GVITALVLLGRAAFVFPLSVL. Topologically, residues 364-380 are vacuolar; sequence TNFMNRHTERNESITFK. N-linked (GlcNAc...) asparagine glycosylation is present at Asn374. The helical transmembrane segment at 381–401 threads the bilayer; sequence HQVIIWWAGLMRGAVSIALAF. Topologically, residues 402–415 are cytoplasmic; sequence KQFTYSGVTLDPVN. A helical membrane pass occupies residues 416–436; it reads AAMVTNTTIVVLFTTLVFGFL. Topologically, residues 437–529 are vacuolar; sequence TKPLVNYLLP…GPRRENQPEC (93 aa).

This sequence belongs to the monovalent cation:proton antiporter 1 (CPA1) transporter (TC 2.A.36) family. In terms of tissue distribution, expressed at very low levels in roots and shoots.

It is found in the vacuole membrane. The catalysed reaction is Na(+)(in) + H(+)(out) = Na(+)(out) + H(+)(in). It catalyses the reaction K(+)(in) + H(+)(out) = K(+)(out) + H(+)(in). In terms of biological role, may act in low affinity electroneutral exchange of protons for cations such as Na(+) or K(+) across membranes. May also exchange Li(+) and Cs(+) with a lower affinity. This chain is Sodium/hydrogen exchanger 4 (NHX4), found in Arabidopsis thaliana (Mouse-ear cress).